Here is a 70-residue protein sequence, read N- to C-terminus: Brevinin-ALb (70 aa).

The first 22 residues, 1–22 (MFTLKKSLLLLFFLGTINLSLC), serve as a signal peptide directing secretion. Residues 23–46 (EQERDADEEERRDDDEMDVEVEKR) constitute a propeptide that is removed on maturation. Cysteines 64 and 70 form a disulfide.

As to expression, expressed by the skin glands.

Its subcellular location is the secreted. Functionally, antimicrobial peptide with activity against Gram-positive and Gram-negative bacteria and against fungi. Has been tested against S.aureus (MIC=5.5 ug/mL), E.coli (MIC=6.5 ug/mL), B.dysenteriae (MIC=2.2 ug/mL), and C.albicans (MIC=7.5 ug/mL). Can regulate or mediate antimicrobial response by stimulating mast cell degranulation. Induces histamine release. Shows cytotoxicity toward solid tumor cell line HepG2. Also shows a potent hemolytic activity (LD(50)=5 ug/ml). The sequence is that of Brevinin-ALb from Amolops loloensis (Lolokou Sucker Frog).